We begin with the raw amino-acid sequence, 66 residues long: Surface composition regulator (66 aa).

This sequence belongs to the GlgS family.

Its function is as follows. Major determinant of cell surface composition. Negatively regulates motility, adhesion and synthesis of biofilm exopolysaccharides. This is Surface composition regulator from Shigella flexneri.